Consider the following 141-residue polypeptide: Large ribosomal subunit protein uL11 (141 aa).

This sequence belongs to the universal ribosomal protein uL11 family. As to quaternary structure, part of the ribosomal stalk of the 50S ribosomal subunit. Interacts with L10 and the large rRNA to form the base of the stalk. L10 forms an elongated spine to which L12 dimers bind in a sequential fashion forming a multimeric L10(L12)X complex. Post-translationally, one or more lysine residues are methylated.

Its function is as follows. Forms part of the ribosomal stalk which helps the ribosome interact with GTP-bound translation factors. In Bacillus cereus (strain ATCC 10987 / NRS 248), this protein is Large ribosomal subunit protein uL11.